Reading from the N-terminus, the 338-residue chain is UPF0324 membrane protein NMA0465 (338 aa).

10 helical membrane passes run Pro5–Leu23, His33–Phe55, Gly62–Phe84, Ala94–Tyr116, Leu123–Val145, Val155–Trp177, Ile222–Thr239, Ile254–Leu273, Leu280–Ala302, and Pro312–Ile334.

It belongs to the UPF0324 family.

The protein resides in the cell membrane. In Neisseria meningitidis serogroup A / serotype 4A (strain DSM 15465 / Z2491), this protein is UPF0324 membrane protein NMA0465.